A 370-amino-acid chain; its full sequence is Putative agmatine deiminase (370 aa).

The active-site Amidino-cysteine intermediate is the C361.

It belongs to the agmatine deiminase family.

The enzyme catalyses agmatine + H2O = N-carbamoylputrescine + NH4(+). This is Putative agmatine deiminase from Shewanella baltica (strain OS155 / ATCC BAA-1091).